The primary structure comprises 94 residues: Pyrimidine/purine nucleoside phosphorylase (94 aa).

The protein belongs to the nucleoside phosphorylase PpnP family.

It catalyses the reaction a purine D-ribonucleoside + phosphate = a purine nucleobase + alpha-D-ribose 1-phosphate. The enzyme catalyses adenosine + phosphate = alpha-D-ribose 1-phosphate + adenine. It carries out the reaction cytidine + phosphate = cytosine + alpha-D-ribose 1-phosphate. The catalysed reaction is guanosine + phosphate = alpha-D-ribose 1-phosphate + guanine. It catalyses the reaction inosine + phosphate = alpha-D-ribose 1-phosphate + hypoxanthine. The enzyme catalyses thymidine + phosphate = 2-deoxy-alpha-D-ribose 1-phosphate + thymine. It carries out the reaction uridine + phosphate = alpha-D-ribose 1-phosphate + uracil. The catalysed reaction is xanthosine + phosphate = alpha-D-ribose 1-phosphate + xanthine. In terms of biological role, catalyzes the phosphorolysis of diverse nucleosides, yielding D-ribose 1-phosphate and the respective free bases. Can use uridine, adenosine, guanosine, cytidine, thymidine, inosine and xanthosine as substrates. Also catalyzes the reverse reactions. The protein is Pyrimidine/purine nucleoside phosphorylase of Cronobacter sakazakii (strain ATCC BAA-894) (Enterobacter sakazakii).